We begin with the raw amino-acid sequence, 304 residues long: Tyrosine recombinase XerC (304 aa).

One can recognise a Core-binding (CB) domain in the interval 2 to 88 (ANVKNFLTLF…ALRSFYKFLL (87 aa)). The 186-residue stretch at 109-294 (RIPKFLYEKE…SKDMLRKTYM (186 aa)) folds into the Tyr recombinase domain. Residues Arg-149, Lys-173, His-246, Arg-249, and His-272 contribute to the active site. Tyr-281 functions as the O-(3'-phospho-DNA)-tyrosine intermediate in the catalytic mechanism.

This sequence belongs to the 'phage' integrase family. XerC subfamily. Forms a cyclic heterotetrameric complex composed of two molecules of XerC and two molecules of XerD.

It localises to the cytoplasm. In terms of biological role, site-specific tyrosine recombinase, which acts by catalyzing the cutting and rejoining of the recombining DNA molecules. The XerC-XerD complex is essential to convert dimers of the bacterial chromosome into monomers to permit their segregation at cell division. It also contributes to the segregational stability of plasmids. In Bacillus licheniformis (strain ATCC 14580 / DSM 13 / JCM 2505 / CCUG 7422 / NBRC 12200 / NCIMB 9375 / NCTC 10341 / NRRL NRS-1264 / Gibson 46), this protein is Tyrosine recombinase XerC.